The following is a 90-amino-acid chain: Small ribosomal subunit protein bS16 (90 aa).

This sequence belongs to the bacterial ribosomal protein bS16 family.

The sequence is that of Small ribosomal subunit protein bS16 from Brevibacillus brevis (strain 47 / JCM 6285 / NBRC 100599).